The following is a 248-amino-acid chain: Anamorsin homolog (248 aa).

Residues 4–129 (FKGLQKSLYI…ETGSSARLSF (126 aa)) are N-terminal SAM-like domain. Residues 130–161 (AKKNASAINVWKISGDDEELIDEEELLDEEDK) are linker. [2Fe-2S] cluster-binding residues include Cys-172, Cys-181, Cys-184, and Cys-186. A fe-S binding site A region spans residues 172 to 186 (CSTTGKRKACKNCSC). [4Fe-4S] cluster is bound by residues Cys-209, Cys-212, Cys-220, and Cys-223. Short sequence motifs (cx2C motif) lie at residues 209-212 (CGNC) and 220-223 (CSTC). Positions 209-223 (CGNCYLGDAFRCSTC) are fe-S binding site B.

It belongs to the anamorsin family. As to quaternary structure, monomer. Requires [2Fe-2S] cluster as cofactor. [4Fe-4S] cluster serves as cofactor.

The protein resides in the cytoplasm. Its subcellular location is the mitochondrion intermembrane space. Component of the cytosolic iron-sulfur (Fe-S) protein assembly (CIA) machinery. Required for the maturation of extramitochondrial Fe-S proteins. Part of an electron transfer chain functioning in an early step of cytosolic Fe-S biogenesis, facilitating the de novo assembly of a [4Fe-4S] cluster on the cytosolic Fe-S scaffold complex. Electrons are transferred from NADPH via a FAD- and FMN-containing diflavin oxidoreductase. Together with the diflavin oxidoreductase, also required for the assembly of the diferric tyrosyl radical cofactor of ribonucleotide reductase (RNR), probably by providing electrons for reduction during radical cofactor maturation in the catalytic small subunit. The protein is Anamorsin homolog of Drosophila erecta (Fruit fly).